A 513-amino-acid polypeptide reads, in one-letter code: Ankyrin repeat-containing protein YIL001W (513 aa).

ANK repeat units follow at residues 8–37 (KNFE…NVNS) and 41–70 (FDNS…VCDR). 2 consecutive BTB domains span residues 122–179 (RDIT…KFLY) and 274–360 (PDVQ…DIPW).

The polypeptide is Ankyrin repeat-containing protein YIL001W (Saccharomyces cerevisiae (strain ATCC 204508 / S288c) (Baker's yeast)).